We begin with the raw amino-acid sequence, 217 residues long: Adenylate kinase (217 aa).

ATP is bound at residue 10 to 15 (GSGKGT). The interval 30 to 59 (STGDLLRAAVAAGSELGKQAKAAMDAGELV) is NMP. AMP is bound by residues Thr-31, Arg-36, 57–59 (ELV), 85–88 (GFPR), and Gln-92. The tract at residues 126 to 164 (GRRTCQACGAIYNIYFSPPEVDHRCDKCNSDQLVQRSDD) is LID. Residue Arg-127 participates in ATP binding. Zn(2+)-binding residues include Cys-130 and Cys-133. 136 to 137 (IY) serves as a coordination point for ATP. Residues Cys-150 and Cys-153 each contribute to the Zn(2+) site. Residues Arg-161 and Arg-172 each contribute to the AMP site. Position 200 (Asp-200) interacts with ATP.

The protein belongs to the adenylate kinase family. Monomer.

Its subcellular location is the cytoplasm. It carries out the reaction AMP + ATP = 2 ADP. Its pathway is purine metabolism; AMP biosynthesis via salvage pathway; AMP from ADP: step 1/1. Functionally, catalyzes the reversible transfer of the terminal phosphate group between ATP and AMP. Plays an important role in cellular energy homeostasis and in adenine nucleotide metabolism. This chain is Adenylate kinase, found in Nitrosococcus oceani (strain ATCC 19707 / BCRC 17464 / JCM 30415 / NCIMB 11848 / C-107).